Here is a 408-residue protein sequence, read N- to C-terminus: Peptidase T (408 aa).

His-78 provides a ligand contact to Zn(2+). Asp-80 is an active-site residue. Asp-140 is a binding site for Zn(2+). Glu-173 serves as the catalytic Proton acceptor. Zn(2+) is bound by residues Glu-174, Asp-196, and His-379.

This sequence belongs to the peptidase M20B family. Requires Zn(2+) as cofactor.

The protein localises to the cytoplasm. It catalyses the reaction Release of the N-terminal residue from a tripeptide.. Its function is as follows. Cleaves the N-terminal amino acid of tripeptides. The protein is Peptidase T of Citrobacter koseri (strain ATCC BAA-895 / CDC 4225-83 / SGSC4696).